The following is a 212-amino-acid chain: Imidazole glycerol phosphate synthase subunit HisH (212 aa).

One can recognise a Glutamine amidotransferase type-1 domain in the interval 3-212 (TVAVIDYGMG…QNFIAWDGRW (210 aa)). The Nucleophile role is filled by cysteine 81. Residues histidine 190 and glutamate 192 contribute to the active site.

As to quaternary structure, heterodimer of HisH and HisF.

The protein resides in the cytoplasm. The catalysed reaction is 5-[(5-phospho-1-deoxy-D-ribulos-1-ylimino)methylamino]-1-(5-phospho-beta-D-ribosyl)imidazole-4-carboxamide + L-glutamine = D-erythro-1-(imidazol-4-yl)glycerol 3-phosphate + 5-amino-1-(5-phospho-beta-D-ribosyl)imidazole-4-carboxamide + L-glutamate + H(+). It catalyses the reaction L-glutamine + H2O = L-glutamate + NH4(+). Its pathway is amino-acid biosynthesis; L-histidine biosynthesis; L-histidine from 5-phospho-alpha-D-ribose 1-diphosphate: step 5/9. IGPS catalyzes the conversion of PRFAR and glutamine to IGP, AICAR and glutamate. The HisH subunit catalyzes the hydrolysis of glutamine to glutamate and ammonia as part of the synthesis of IGP and AICAR. The resulting ammonia molecule is channeled to the active site of HisF. This Pseudomonas putida (strain ATCC 47054 / DSM 6125 / CFBP 8728 / NCIMB 11950 / KT2440) protein is Imidazole glycerol phosphate synthase subunit HisH.